The chain runs to 654 residues: U-box domain-containing protein 12 (654 aa).

In terms of domain architecture, U-box spans 255 to 329 (IPPEEFRCPI…AQWCESNGIE (75 aa)). Residues 329 to 352 (EPPKRPNISQPSSKASSSSSAPDD) form a disordered region. Residues 337–349 (SQPSSKASSSSSA) are compositionally biased toward low complexity. 5 ARM repeats span residues 387-427 (NHNR…NLSI), 430-469 (ENKG…SLSV), 471-510 (DENK…NLCI), 512-551 (QGNK…ILSS), and 553-592 (PDGK…HLCS).

It catalyses the reaction S-ubiquitinyl-[E2 ubiquitin-conjugating enzyme]-L-cysteine + [acceptor protein]-L-lysine = [E2 ubiquitin-conjugating enzyme]-L-cysteine + N(6)-ubiquitinyl-[acceptor protein]-L-lysine.. Its pathway is protein modification; protein ubiquitination. In terms of biological role, functions as an E3 ubiquitin ligase. The chain is U-box domain-containing protein 12 (PUB12) from Arabidopsis thaliana (Mouse-ear cress).